The following is a 277-amino-acid chain: tRNA U34 carboxymethyltransferase (277 aa).

Carboxy-S-adenosyl-L-methionine-binding positions include lysine 46, tryptophan 60, lysine 65, glycine 84, 106-108 (DPS), 133-134 (VE), tyrosine 153, and arginine 268.

Belongs to the class I-like SAM-binding methyltransferase superfamily. CmoB family. As to quaternary structure, homotetramer.

It catalyses the reaction carboxy-S-adenosyl-L-methionine + 5-hydroxyuridine(34) in tRNA = 5-carboxymethoxyuridine(34) in tRNA + S-adenosyl-L-homocysteine + H(+). Catalyzes carboxymethyl transfer from carboxy-S-adenosyl-L-methionine (Cx-SAM) to 5-hydroxyuridine (ho5U) to form 5-carboxymethoxyuridine (cmo5U) at position 34 in tRNAs. This Wolinella succinogenes (strain ATCC 29543 / DSM 1740 / CCUG 13145 / JCM 31913 / LMG 7466 / NCTC 11488 / FDC 602W) (Vibrio succinogenes) protein is tRNA U34 carboxymethyltransferase.